Consider the following 311-residue polypeptide: Aspartate carbamoyltransferase catalytic subunit (311 aa).

Carbamoyl phosphate is bound by residues arginine 55 and threonine 56. Lysine 85 is a binding site for L-aspartate. Carbamoyl phosphate-binding residues include arginine 106, histidine 135, and glutamine 138. The L-aspartate site is built by arginine 168 and arginine 230. Residues leucine 268 and proline 269 each coordinate carbamoyl phosphate.

This sequence belongs to the aspartate/ornithine carbamoyltransferase superfamily. ATCase family. Heterododecamer (2C3:3R2) of six catalytic PyrB chains organized as two trimers (C3), and six regulatory PyrI chains organized as three dimers (R2).

It carries out the reaction carbamoyl phosphate + L-aspartate = N-carbamoyl-L-aspartate + phosphate + H(+). It functions in the pathway pyrimidine metabolism; UMP biosynthesis via de novo pathway; (S)-dihydroorotate from bicarbonate: step 2/3. Its function is as follows. Catalyzes the condensation of carbamoyl phosphate and aspartate to form carbamoyl aspartate and inorganic phosphate, the committed step in the de novo pyrimidine nucleotide biosynthesis pathway. This Serratia proteamaculans (strain 568) protein is Aspartate carbamoyltransferase catalytic subunit.